The primary structure comprises 347 residues: MTERLLIKALSGGKNTKIITLNGKKMTKMPSALGKLPGLKTLVLQNNLIPKVCPELCNLTQLTTLNLGNNLLEEVPEEMKYLTSLKNLHLSGNRICRFAPGACDGLQNLILLNLNNNHLTQLPQEVSRLKSLTYMSINYNQLASIPRELCFLENLVELQLNYNQLICIPEEIKFLKKLQKLLLARNNIGVLPEELCDLKKLRILDIAGNIIQIFPSGFQDLKLREFYCEGNPLFLQQPVISTQQENVWSLQEITSRFVMNQLAENNPFLMDDIERYPQVRSMISQGKTCAICGQYFITVWLECVRFVPPPKDWKISKNLKLVPLQVLICSYKCFTQRDPNLFGIAQV.

LRR repeat units follow at residues Gly38–Thr60, Gln61–Leu82, Ser84–Gly105, Asn108–Leu129, Ser131–Glu153, Asn154–Leu175, Lys177–Lys199, and Lys200–Lys222.

The protein belongs to the LRRC69 family.

This Homo sapiens (Human) protein is Leucine-rich repeat-containing protein 69 (LRRC69).